Reading from the N-terminus, the 182-residue chain is uncharacterized protein (182 aa).

It to M.tuberculosis Rv2313c.

This is an uncharacterized protein from Escherichia coli (strain K12).